A 720-amino-acid polypeptide reads, in one-letter code: Catalase-peroxidase (720 aa).

Residues 82 to 207 (WHSAGTYRTF…LGNTVMGLIY (126 aa)) constitute a cross-link (tryptophyl-tyrosyl-methioninium (Trp-Tyr) (with M-233)). His83 serves as the catalytic Proton acceptor. Positions 207–233 (YVNPEGPNGEPDLEGSAKNIRESFGKM) form a cross-link, tryptophyl-tyrosyl-methioninium (Tyr-Met) (with W-82). Residue His248 coordinates heme b.

Belongs to the peroxidase family. Peroxidase/catalase subfamily. In terms of assembly, homodimer or homotetramer. The cofactor is heme b. In terms of processing, formation of the three residue Trp-Tyr-Met cross-link is important for the catalase, but not the peroxidase activity of the enzyme.

The catalysed reaction is H2O2 + AH2 = A + 2 H2O. The enzyme catalyses 2 H2O2 = O2 + 2 H2O. Its function is as follows. Bifunctional enzyme with both catalase and broad-spectrum peroxidase activity. The polypeptide is Catalase-peroxidase (Halobacterium salinarum (strain ATCC 29341 / DSM 671 / R1)).